A 523-amino-acid polypeptide reads, in one-letter code: uncharacterized protein (523 aa).

This is an uncharacterized protein from Saccharomyces cerevisiae (strain ATCC 204508 / S288c) (Baker's yeast).